Consider the following 358-residue polypeptide: Short chain dehydrogenase sor7 (358 aa).

Positions 1–22 (MSSPAIGQPPIPPTPTDANISG) are disordered. NADP(+)-binding residues include Leu-34, Asp-88, Asn-115, Tyr-206, Lys-210, Val-238, and Thr-240. The active-site Proton donor is Tyr-206. Lys-210 serves as the catalytic Lowers pKa of active site Tyr.

The protein belongs to the short-chain dehydrogenases/reductases (SDR) family.

It functions in the pathway secondary metabolite biosynthesis. Functionally, short chain dehydrogenase; part of the SOR gene cluster that mediates the biosynthesis of sorbicillinoids, a diverse group of yellow secondary metabolites that restrict growth of competing pathogenic fungi but not of bacteria. Sorbicillinoids biosynthesis requires the action of two PKSs. The SOR cluster is required for the production of trichodimerol and dihydrotrichotetronin, with sor2 being sufficient for production of trichodimerol, but not dihydrotrichotetronin in the light. Sor1 iteratively combines three acetyl units and the growing chain is modified by the ketoacyl reductase subunit, and optional by the enoyl reductase subunit in the second cycle. The polyketide is then handed over to the PKS sor2, which adds three more acetyl units, and two methyl groups. Sor2 releases an aldehyde, which undergoes spontaneous cyclization resulting in the formation of sorbicillin or 2',3'-dihydrosorbicillin. The monooxygenase sor5 oxidizes sorbicillin and 2',3'-dihydrosorbicillin to 2',3'-dihydrosorbicillinol and sorbicillinol, respectively. The oxidoreductase sor8 further converts sorbicillinol into oxosorbicillinol. Sorbicillinol is the building block for the other sorbicillinoids such as disorbicillinol, bisvertinolon, dihydrobisvertinolone, and dihydrotrichotetronine. In Hypocrea jecorina (strain QM6a) (Trichoderma reesei), this protein is Short chain dehydrogenase sor7.